A 61-amino-acid chain; its full sequence is Small ribosomal subunit protein uS14 (61 aa).

Positions 24, 27, 40, and 43 each coordinate Zn(2+).

This sequence belongs to the universal ribosomal protein uS14 family. Zinc-binding uS14 subfamily. As to quaternary structure, part of the 30S ribosomal subunit. Contacts proteins S3 and S10. It depends on Zn(2+) as a cofactor.

Functionally, binds 16S rRNA, required for the assembly of 30S particles and may also be responsible for determining the conformation of the 16S rRNA at the A site. This chain is Small ribosomal subunit protein uS14, found in Acidithiobacillus ferrooxidans (strain ATCC 23270 / DSM 14882 / CIP 104768 / NCIMB 8455) (Ferrobacillus ferrooxidans (strain ATCC 23270)).